The chain runs to 216 residues: DNA gyrase subunit B (216 aa).

Residues 140-216 form the Toprim domain; it reads SELYLVEGDS…PDKLRYHKII (77 aa).

Belongs to the type II topoisomerase GyrB family. In terms of assembly, heterotetramer, composed of two GyrA and two GyrB chains. In the heterotetramer, GyrA contains the active site tyrosine that forms a transient covalent intermediate with DNA, while GyrB binds cofactors and catalyzes ATP hydrolysis.

It localises to the cytoplasm. It carries out the reaction ATP-dependent breakage, passage and rejoining of double-stranded DNA.. A type II topoisomerase that negatively supercoils closed circular double-stranded (ds) DNA in an ATP-dependent manner to modulate DNA topology and maintain chromosomes in an underwound state. Negative supercoiling favors strand separation, and DNA replication, transcription, recombination and repair, all of which involve strand separation. Also able to catalyze the interconversion of other topological isomers of dsDNA rings, including catenanes and knotted rings. Type II topoisomerases break and join 2 DNA strands simultaneously in an ATP-dependent manner. In Acinetobacter venetianus (strain ATCC 31012 / DSM 23050 / BCRC 14357 / CCUG 45561 / CIP 110063 / KCTC 2702 / LMG 19082 / RAG-1), this protein is DNA gyrase subunit B (gyrB).